Here is a 124-residue protein sequence, read N- to C-terminus: Small ribosomal subunit protein uS12cz/uS12cy (124 aa).

It belongs to the universal ribosomal protein uS12 family. Part of the 30S ribosomal subunit.

Its subcellular location is the plastid. Functionally, with S4 and S5 plays an important role in translational accuracy. Located at the interface of the 30S and 50S subunits. This Epifagus virginiana (Beechdrops) protein is Small ribosomal subunit protein uS12cz/uS12cy (rps12-A).